Consider the following 173-residue polypeptide: MIMKMTHLNMKDFNKPNEPFVVFGRMIPAFENGVWTYTEERFSKPYFKQYEDDDMDVSYVEEEGKAAFLYYLENNCIGRIKIRSNWNGYALIEDIAVAKDYRKKGVGTALLHKAIEWAKENHFCGLMLETQDINISACHFYAKHHFIIGAVDTMLYSNFPTANEIAIFWYYKF.

In terms of domain architecture, N-acetyltransferase spans 21–173; the sequence is VVFGRMIPAF…EIAIFWYYKF (153 aa).

It belongs to the acetyltransferase family. GNAT subfamily. As to quaternary structure, homodimer.

The catalysed reaction is streptothricin D + acetyl-CoA = N(beta)-acetylstreptothricin D + CoA + H(+). The enzyme catalyses streptothricin F + acetyl-CoA = N(beta)-acetylstreptothricin F + CoA + H(+). Involved in resistance to streptothricin, a broad-spectrum antibiotic produced by streptomycetes. Detoxifies streptothricin via acetylation of the beta amino group of the first beta-lysyl moiety of streptothricin. This chain is Streptothricin acetyltransferase A, found in Bacillus subtilis (strain 168).